A 447-amino-acid polypeptide reads, in one-letter code: Cysteine--tRNA ligase (447 aa).

Position 28 (Cys28) interacts with Zn(2+). A 'HIGH' region motif is present at residues 30–40; it reads PTVYNYIHIGN. Cys211, His236, and Glu240 together coordinate Zn(2+). Residues 268–272 carry the 'KMSKS' region motif; it reads KMSKS. Lys271 serves as a coordination point for ATP.

The protein belongs to the class-I aminoacyl-tRNA synthetase family. In terms of assembly, monomer. Zn(2+) serves as cofactor.

It is found in the cytoplasm. The enzyme catalyses tRNA(Cys) + L-cysteine + ATP = L-cysteinyl-tRNA(Cys) + AMP + diphosphate. The sequence is that of Cysteine--tRNA ligase from Streptococcus pyogenes serotype M28 (strain MGAS6180).